The sequence spans 187 residues: Ribosome-recycling factor (187 aa).

The protein belongs to the RRF family.

The protein localises to the cytoplasm. Functionally, responsible for the release of ribosomes from messenger RNA at the termination of protein biosynthesis. May increase the efficiency of translation by recycling ribosomes from one round of translation to another. This Anaeromyxobacter sp. (strain Fw109-5) protein is Ribosome-recycling factor.